The sequence spans 310 residues: Tryptophan 2,3-dioxygenase (310 aa).

The segment at 1 to 39 (MQPPGNDAPAGCPFSGARAQGTQAAHEAPHVPGDAGEQA) is disordered. Residues 79–83 (FIIQH), Tyr-141, and Arg-145 each bind substrate. A heme-binding site is contributed by His-268. Position 282 (Thr-282) interacts with substrate.

The protein belongs to the tryptophan 2,3-dioxygenase family. Homotetramer. It depends on heme as a cofactor.

It catalyses the reaction L-tryptophan + O2 = N-formyl-L-kynurenine. Its pathway is amino-acid degradation; L-tryptophan degradation via kynurenine pathway; L-kynurenine from L-tryptophan: step 1/2. In terms of biological role, heme-dependent dioxygenase that catalyzes the oxidative cleavage of the L-tryptophan (L-Trp) pyrrole ring and converts L-tryptophan to N-formyl-L-kynurenine. Catalyzes the oxidative cleavage of the indole moiety. This is Tryptophan 2,3-dioxygenase from Burkholderia multivorans (strain ATCC 17616 / 249).